The chain runs to 145 residues: Fatty acid-binding protein homolog 4 (145 aa).

The protein belongs to the calycin superfamily. Fatty-acid binding protein (FABP) family.

The sequence is that of Fatty acid-binding protein homolog 4 (lbp-4) from Caenorhabditis elegans.